The following is a 456-amino-acid chain: Hydroxymethylglutaryl-CoA synthase ERG13 (456 aa).

A35 provides a ligand contact to (3S)-3-hydroxy-3-methylglutaryl-CoA. Residue E86 is the Proton donor/acceptor of the active site. (3S)-3-hydroxy-3-methylglutaryl-CoA-binding residues include C118, N156, T160, S210, H259, K268, N336, and S370. C118 acts as the Acyl-thioester intermediate in catalysis. The active-site Proton donor/acceptor is H259.

The protein belongs to the thiolase-like superfamily. HMG-CoA synthase family.

It carries out the reaction acetoacetyl-CoA + acetyl-CoA + H2O = (3S)-3-hydroxy-3-methylglutaryl-CoA + CoA + H(+). It participates in metabolic intermediate biosynthesis; (R)-mevalonate biosynthesis; (R)-mevalonate from acetyl-CoA: step 2/3. Functionally, hydroxymethylglutaryl-CoA synthase; part of the first module of ergosterol biosynthesis pathway that includes the early steps of the pathway, conserved across all eukaryotes, and which results in the formation of mevalonate from acetyl-coenzyme A (acetyl-CoA). ERG13 condenses acetyl-CoA with acetoacetyl-CoA to form hydroxymethylglutaryl-CoA (HMG-CoA). The first module starts with the action of the cytosolic acetyl-CoA acetyltransferase ERG10B that catalyzes the formation of acetoacetyl-CoA. The hydroxymethylglutaryl-CoA synthases ERG13 then condenses acetyl-CoA with acetoacetyl-CoA to form HMG-CoA. The rate-limiting step of the early module is the reduction to mevalonate by the 3-hydroxy-3-methylglutaryl-coenzyme A (HMG-CoA) reductases HMG1. The sequence is that of Hydroxymethylglutaryl-CoA synthase ERG13 from Gibberella zeae (strain ATCC MYA-4620 / CBS 123657 / FGSC 9075 / NRRL 31084 / PH-1) (Wheat head blight fungus).